Reading from the N-terminus, the 156-residue chain is 6,7-dimethyl-8-ribityllumazine synthase (156 aa).

5-amino-6-(D-ribitylamino)uracil contacts are provided by residues F23, 57-59, and 81-83; these read AFE and AVI. 86 to 87 lines the (2S)-2-hydroxy-3-oxobutyl phosphate pocket; sequence ST. H89 (proton donor) is an active-site residue. Residue F114 participates in 5-amino-6-(D-ribitylamino)uracil binding. A (2S)-2-hydroxy-3-oxobutyl phosphate-binding site is contributed by R128.

It belongs to the DMRL synthase family.

The enzyme catalyses (2S)-2-hydroxy-3-oxobutyl phosphate + 5-amino-6-(D-ribitylamino)uracil = 6,7-dimethyl-8-(1-D-ribityl)lumazine + phosphate + 2 H2O + H(+). It participates in cofactor biosynthesis; riboflavin biosynthesis; riboflavin from 2-hydroxy-3-oxobutyl phosphate and 5-amino-6-(D-ribitylamino)uracil: step 1/2. In terms of biological role, catalyzes the formation of 6,7-dimethyl-8-ribityllumazine by condensation of 5-amino-6-(D-ribitylamino)uracil with 3,4-dihydroxy-2-butanone 4-phosphate. This is the penultimate step in the biosynthesis of riboflavin. The protein is 6,7-dimethyl-8-ribityllumazine synthase of Campylobacter fetus subsp. fetus (strain 82-40).